Here is a 367-residue protein sequence, read N- to C-terminus: Voltage-gated potassium channel subunit beta-2 (367 aa).

Residues serine 9, serine 14, and serine 20 each carry the phosphoserine modification. Residue arginine 28 is modified to Asymmetric dimethylarginine; alternate. Omega-N-methylarginine; alternate is present on arginine 28. Position 31 is a phosphoserine (serine 31). Threonine 56, tryptophan 57, glutamine 63, and aspartate 85 together coordinate NADP(+). Tyrosine 90 acts as the Proton donor/acceptor in catalysis. The residue at position 112 (serine 112) is a Phosphoserine. At lysine 124 the chain carries N6-acetyllysine. The NADP(+) site is built by asparagine 158, serine 188, arginine 189, glutamine 214, tryptophan 243, serine 244, proline 245, leucine 246, alanine 247, cysteine 248, lysine 254, tyrosine 262, arginine 264, glycine 323, serine 325, glutamine 329, glutamate 332, and asparagine 333.

This sequence belongs to the shaker potassium channel beta subunit family. As to quaternary structure, homotetramer. Interaction with tetrameric potassium channel alpha subunits gives rise to a heterooctamer. Identified in potassium channel complexes containing KCNA1, KCNA2, KCNA4, KCNA5, KCNA6, KCNAB1, KCNAB2 and KCND3. Interacts (in unphosphorylated form) with MAPRE1. Forms a ternary complex with SQSTM1 and PRKCZ. Post-translationally, phosphorylated by PRKCZ; may be regulated by incorporation in a complex composed of PRKCZ and SQSTM1. Detected in the juxtaparanodal region of nodes of Ranvier in myelinated nerve fibers in the spinal cord (at protein level).

Its subcellular location is the cytoplasm. The protein localises to the membrane. It is found in the cell membrane. It localises to the cell projection. The protein resides in the axon. Its subcellular location is the synapse. The protein localises to the synaptosome. It is found in the cytoskeleton. The catalysed reaction is hydroxyacetone + NADP(+) = methylglyoxal + NADPH + H(+). It carries out the reaction (E)-4-oxonon-2-en-1-ol + NADP(+) = (E)-4-oxonon-2-enal + NADPH + H(+). Functionally, regulatory subunit of the voltage-gated potassium (Kv) Shaker channels composed of pore-forming and potassium-conducting alpha subunits and of regulatory beta subunits. The beta-2/KCNAB2 cytoplasmic subunit promotes potassium channel closure via a mechanism that does not involve physical obstruction of the channel pore. Promotes the inactivation of Kv1.4/KCNA4 and Kv1.5/KCNA5 alpha subunit-containing channels. Displays nicotinamide adenine dinucleotide phosphate (NADPH)-dependent aldoketoreductase activity by catalyzing the NADPH-dependent reduction of a wide range of aldehyde and ketone substrates. Substrate specificity includes methylglyoxal, 9,10-phenanthrenequinone, prostaglandin J2, 4-nitrobenzaldehyde, 4-nitroacetophenone and 4-oxo-trans-2-nonenal (in vitro, no physiological substrate identified yet). The binding of oxidized and reduced nucleotide alters Kv channel gating and may contribute to dynamic fine tuning of cell excitability. Contributes to the regulation of nerve signaling, and prevents neuronal hyperexcitability. This chain is Voltage-gated potassium channel subunit beta-2 (KCNAB2), found in Bos taurus (Bovine).